The primary structure comprises 235 residues: Ion-translocating oxidoreductase complex subunit E (235 aa).

A run of 5 helical transmembrane segments spans residues Leu-63–Phe-83, Ile-93–Ala-113, Thr-117–Gly-137, Ile-152–Leu-172, and Ser-206–Ile-226.

It belongs to the NqrDE/RnfAE family. The complex is composed of six subunits: RnfA, RnfB, RnfC, RnfD, RnfE and RnfG.

The protein localises to the cell inner membrane. Functionally, part of a membrane-bound complex that couples electron transfer with translocation of ions across the membrane. The protein is Ion-translocating oxidoreductase complex subunit E of Haemophilus influenzae (strain ATCC 51907 / DSM 11121 / KW20 / Rd).